Consider the following 200-residue polypeptide: uncharacterized protein (200 aa).

Residues 7–29 (FFFLFSFISHAMMLTGLIGSSSF) form a helical membrane-spanning segment.

It is found in the membrane. This is an uncharacterized protein from Saccharomyces cerevisiae (strain ATCC 204508 / S288c) (Baker's yeast).